Here is an 864-residue protein sequence, read N- to C-terminus: Paramyosin (864 aa).

Residues 1–30 (MSSLYRDLDSDVSSTRIVRHSYNVYRGSSP) are nonhelical region. A coiled-coil region spans residues 31–853 (SSQNRLESRI…QTVRRSRSMS (823 aa)). Residues 854–864 (VSREVTRVVRV) form a nonhelical region region.

It belongs to the paramyosin family. Homodimer. Phosphorylated. As to expression, most abundantly expressed in muscle tissues from byssus retractor and adductor muscles. Low expression in foot, gill, inner mantle and outer mantle.

Its subcellular location is the cytoplasm. It is found in the myofibril. Functionally, paramyosin is a major structural component of many thick filaments isolated from invertebrate muscles. The chain is Paramyosin from Mytilus galloprovincialis (Mediterranean mussel).